The following is a 317-amino-acid chain: Periplasmic [NiFe] hydrogenase small subunit 1 (317 aa).

Positions 1-49 form a signal peptide, tat-type signal; it reads MRFSVGLGKEGAEERLARRGVSRRDFLKFCTAIAVTMGMGPAFAPEVAR. [4Fe-4S] cluster is bound by residues cysteine 67, cysteine 70, cysteine 164, cysteine 200, histidine 238, cysteine 241, cysteine 266, and cysteine 272. [3Fe-4S] cluster-binding residues include cysteine 281, cysteine 299, and cysteine 302.

It belongs to the [NiFe]/[NiFeSe] hydrogenase small subunit family. In terms of assembly, heterodimer of a large and a small subunit. The cofactor is [3Fe-4S] cluster. Requires [4Fe-4S] cluster as cofactor. Predicted to be exported by the Tat system. The position of the signal peptide cleavage has not been experimentally proven.

It is found in the periplasm. It carries out the reaction 2 Fe(III)-[cytochrome c3] + H2 = 2 Fe(II)-[cytochrome c3] + 2 H(+). The chain is Periplasmic [NiFe] hydrogenase small subunit 1 (hynB1) from Nitratidesulfovibrio vulgaris (strain ATCC 29579 / DSM 644 / CCUG 34227 / NCIMB 8303 / VKM B-1760 / Hildenborough) (Desulfovibrio vulgaris).